Reading from the N-terminus, the 571-residue chain is MATLRVSSLFASSSSSLHSNPSVFTKYQSSPKWAFSFPVTPLCSKRSKRIVHCIAGDTLGLTRPNESDAPKISIGAKDTAVVQWQGDLLAIGATENDMARDENSKFKNPLLQQLDSELNGLLSAASSEEDFSGKSGQSVNLRFPGGRITLVGLGSSASSPTSYHSLGQAAAAAAKSSQARNIAVALASTDGLSAESKINSASAIATGVVLGSFEDNRFRSESKKSTLESLDILGLGTGPEIERKIKYAEHVCAGVILGRELVNAPANIVTPAVLAEEAKKIASTYSDVISVNILDAEQCKELKMGAYLAVAAAATENPPYFIHLCFKTPTKERKTKLALVGKGLTFDSGGYNLKVGAGSRIELMKNDMGGAAAVLGAAKALGEIRPSRVEVHFIVAACENMISAEGMRPGDIVTASNGKTIEVNNTDAEGRLTLADALIYACNQGVEKIIDLATLTGAIMVALGPSVAGAFTPNDDLAREVVEAAEASGEKLWRMPMEESYWESMKSGVADMINTGPGNGGAITGALFLKQFVDEKVQWLHLDVAGPVWSDEKKNATGYGVSTLVEWVLRN.

Residues 1 to 53 (MATLRVSSLFASSSSSLHSNPSVFTKYQSSPKWAFSFPVTPLCSKRSKRIVHC) constitute a chloroplast transit peptide. The Mg(2+) site is built by Lys342 and Asp347. Lys354 is an active-site residue. Residues Asp367, Asp427, and Glu429 each coordinate Mg(2+). Arg431 is a catalytic residue.

This sequence belongs to the peptidase M17 family. As to quaternary structure, homohexamer (dimer of homotrimers). Requires Mg(2+) as cofactor. As to expression, observed during floral development. Expressed in healthy and senescent leaves, cotyledons (emergence from seed coats), pistils, sepals, petals, stamens, and floral buds (at protein level). Present at very low levels in healthy leaves.

It is found in the plastid. The protein resides in the chloroplast. The catalysed reaction is Release of an N-terminal amino acid, Xaa-|-Yaa-, in which Xaa is preferably Leu, but may be other amino acids including Pro although not Arg or Lys, and Yaa may be Pro. Amino acid amides and methyl esters are also readily hydrolyzed, but rates on arylamides are exceedingly low.. It catalyses the reaction Release of N-terminal proline from a peptide.. Catalyzes the removal of unsubstituted N-terminal amino acids from various peptides. When associated as homohexamer, catalyzes the proteolyzes of Xaa-Leu dipeptides. Possesses leucine aminopeptidase activity against the model substrate leucine-amido methyl coumarin. Presumably involved in the processing and regular turnover of intracellular proteins. Regulates wound signaling and has a role in insect defense. Functionally, functions as a molecular chaperone to protect proteins from heat-induced damage. This chain is Leucine aminopeptidase A1, chloroplastic, found in Solanum lycopersicum (Tomato).